The chain runs to 565 residues: MRQSKFFMPTLKEAPSDAVAKSHQLMLRGGYIRQVTAGVYAYLPLGYRVLRKAENIIEEEMDNINVPEMIMPHLLPATLWQESGRYKKYGAEMFKLQDRHGRESLLGPTHEETFTEIVAKNLKSYKQMPLALYQIQTKFRDENRPRFGLLRGREFVMLDGYSFAATREQLDEQFDDQKSAYLKIFNRAGVTVHPVIADSGTMGGKNSTEFQAPAAIGEDTIATNEKGTYAANLEMAKSIDTFKQEPEEAKDLAKVATPGMDTIEKLADFLKVPSTRIVKSILYIADDQKVLVLIRGDKEINEVKLGHILDADEVRTANADELVEITGSEKGGVGPINADWADKIIADETVKDLYNVVVGANETDYQYQNANLDRDFKVDEFADIRTANEGEPDPVDHLPLKFTTSIEVGHIFKLGTYYTDTMGADFLDNNGKAKPVIMGSYGIGVTRMLSAAVEQHLTENGIAWPKEIAPFAIHLIQMKMKDETQTKLAEKLEKELSAKYDVLYDDRNERPGVKFNDADLVGAPLRITIGRKAKDGIVEVKRPMDEKATEVNISDLDAVITKELG.

The protein belongs to the class-II aminoacyl-tRNA synthetase family. ProS type 1 subfamily. As to quaternary structure, homodimer.

The protein localises to the cytoplasm. It catalyses the reaction tRNA(Pro) + L-proline + ATP = L-prolyl-tRNA(Pro) + AMP + diphosphate. Functionally, catalyzes the attachment of proline to tRNA(Pro) in a two-step reaction: proline is first activated by ATP to form Pro-AMP and then transferred to the acceptor end of tRNA(Pro). As ProRS can inadvertently accommodate and process non-cognate amino acids such as alanine and cysteine, to avoid such errors it has two additional distinct editing activities against alanine. One activity is designated as 'pretransfer' editing and involves the tRNA(Pro)-independent hydrolysis of activated Ala-AMP. The other activity is designated 'posttransfer' editing and involves deacylation of mischarged Ala-tRNA(Pro). The misacylated Cys-tRNA(Pro) is not edited by ProRS. The protein is Proline--tRNA ligase of Lactobacillus johnsonii (strain CNCM I-12250 / La1 / NCC 533).